Reading from the N-terminus, the 320-residue chain is Malate dehydrogenase (320 aa).

Residues 10–15 (GAGQIG) and Asp-34 each bind NAD(+). Arg-83 and Arg-89 together coordinate substrate. NAD(+) is bound by residues Asn-96 and 119 to 121 (ITN). Substrate is bound by residues Asn-121 and Arg-152. The Proton acceptor role is filled by His-176.

This sequence belongs to the LDH/MDH superfamily. MDH type 3 family.

It catalyses the reaction (S)-malate + NAD(+) = oxaloacetate + NADH + H(+). Its function is as follows. Catalyzes the reversible oxidation of malate to oxaloacetate. In Jannaschia sp. (strain CCS1), this protein is Malate dehydrogenase.